The sequence spans 476 residues: tRNA-2-methylthio-N(6)-dimethylallyladenosine synthase (476 aa).

The segment covering 1-14 (MTEVVHLHMPEEAR) has biased composition (basic and acidic residues). The disordered stretch occupies residues 1-20 (MTEVVHLHMPEEARATQSRD). In terms of domain architecture, MTTase N-terminal spans 26–147 (RRYYVWTVGC…APNPIYQLEE (122 aa)). Residues Cys-35, Cys-71, Cys-105, Cys-170, Cys-174, and Cys-177 each coordinate [4Fe-4S] cluster. The 235-residue stretch at 156–390 (DHPPVSVHVP…ERLQEQIAAE (235 aa)) folds into the Radical SAM core domain. The region spanning 393-453 (ARFLHQTVEV…PWSLQGVLAR (61 aa)) is the TRAM domain.

Belongs to the methylthiotransferase family. MiaB subfamily. As to quaternary structure, monomer. [4Fe-4S] cluster is required as a cofactor.

The protein localises to the cytoplasm. It catalyses the reaction N(6)-dimethylallyladenosine(37) in tRNA + (sulfur carrier)-SH + AH2 + 2 S-adenosyl-L-methionine = 2-methylsulfanyl-N(6)-dimethylallyladenosine(37) in tRNA + (sulfur carrier)-H + 5'-deoxyadenosine + L-methionine + A + S-adenosyl-L-homocysteine + 2 H(+). Functionally, catalyzes the methylthiolation of N6-(dimethylallyl)adenosine (i(6)A), leading to the formation of 2-methylthio-N6-(dimethylallyl)adenosine (ms(2)i(6)A) at position 37 in tRNAs that read codons beginning with uridine. This is tRNA-2-methylthio-N(6)-dimethylallyladenosine synthase from Roseiflexus sp. (strain RS-1).